Consider the following 663-residue polypeptide: Methionine--tRNA ligase (663 aa).

Residues 10–20 (AYTNGPLHLGH) carry the 'HIGH' region motif. Zn(2+) contacts are provided by Cys142, Cys145, Cys154, and Cys157. A 'KMSKS' region motif is present at residues 323–327 (KMSTS). An ATP-binding site is contributed by Thr326. Positions 563–663 (YFTKVDLRVG…REISLGSKIH (101 aa)) constitute a tRNA-binding domain.

This sequence belongs to the class-I aminoacyl-tRNA synthetase family. MetG type 1 subfamily. As to quaternary structure, homodimer. Zn(2+) serves as cofactor.

Its subcellular location is the cytoplasm. It catalyses the reaction tRNA(Met) + L-methionine + ATP = L-methionyl-tRNA(Met) + AMP + diphosphate. In terms of biological role, is required not only for elongation of protein synthesis but also for the initiation of all mRNA translation through initiator tRNA(fMet) aminoacylation. This chain is Methionine--tRNA ligase, found in Methanococcus vannielii (strain ATCC 35089 / DSM 1224 / JCM 13029 / OCM 148 / SB).